The sequence spans 258 residues: UPF0246 protein YaaA (258 aa).

This sequence belongs to the UPF0246 family.

The sequence is that of UPF0246 protein YaaA from Escherichia coli O157:H7 (strain EC4115 / EHEC).